Reading from the N-terminus, the 123-residue chain is WAP four-disulfide core domain protein 5 (123 aa).

The first 24 residues, 1 to 24, serve as a signal peptide directing secretion; that stretch reads MRTQSLLLLGALLAVGSQLPAVFG. WAP domains follow at residues 27–73 and 74–121; these read KGEK…CVPR and VSVK…RDPA. Cystine bridges form between cysteine 34–cysteine 62, cysteine 41–cysteine 66, cysteine 49–cysteine 61, cysteine 55–cysteine 70, cysteine 81–cysteine 109, cysteine 88–cysteine 113, cysteine 96–cysteine 108, and cysteine 102–cysteine 117.

It localises to the secreted. Functionally, putative acid-stable proteinase inhibitor. This Pan troglodytes (Chimpanzee) protein is WAP four-disulfide core domain protein 5 (WFDC5).